The following is a 413-amino-acid chain: Tryptophan synthase beta chain (413 aa).

K107 bears the N6-(pyridoxal phosphate)lysine mark.

Belongs to the TrpB family. As to quaternary structure, tetramer of two alpha and two beta chains. Pyridoxal 5'-phosphate serves as cofactor.

It catalyses the reaction (1S,2R)-1-C-(indol-3-yl)glycerol 3-phosphate + L-serine = D-glyceraldehyde 3-phosphate + L-tryptophan + H2O. It functions in the pathway amino-acid biosynthesis; L-tryptophan biosynthesis; L-tryptophan from chorismate: step 5/5. In terms of biological role, the beta subunit is responsible for the synthesis of L-tryptophan from indole and L-serine. The chain is Tryptophan synthase beta chain from Trichormus variabilis (strain ATCC 29413 / PCC 7937) (Anabaena variabilis).